The sequence spans 358 residues: Nicotinate-nucleotide--dimethylbenzimidazole phosphoribosyltransferase (358 aa).

Glu313 acts as the Proton acceptor in catalysis.

This sequence belongs to the CobT family.

The enzyme catalyses 5,6-dimethylbenzimidazole + nicotinate beta-D-ribonucleotide = alpha-ribazole 5'-phosphate + nicotinate + H(+). The protein operates within nucleoside biosynthesis; alpha-ribazole biosynthesis; alpha-ribazole from 5,6-dimethylbenzimidazole: step 1/2. Catalyzes the synthesis of alpha-ribazole-5'-phosphate from nicotinate mononucleotide (NAMN) and 5,6-dimethylbenzimidazole (DMB). The chain is Nicotinate-nucleotide--dimethylbenzimidazole phosphoribosyltransferase from Corynebacterium glutamicum (strain R).